Reading from the N-terminus, the 343-residue chain is Cytosolic Fe-S cluster assembly factor CFD1 (343 aa).

15-22 (GKGGVGKS) provides a ligand contact to ATP. 2 stretches are compositionally biased toward polar residues: residues 80–91 (PSSDGLNGSQRA) and 99–110 (ESSSSTVETAPQ). The interval 80 to 110 (PSSDGLNGSQRANKPDDSNESSSSTVETAPQ) is disordered. Cys241 and Cys244 together coordinate [4Fe-4S] cluster.

It belongs to the Mrp/NBP35 ATP-binding proteins family. NUBP2/CFD1 subfamily. As to quaternary structure, heterotetramer of 2 NBP35 and 2 CFD1 chains. Requires [4Fe-4S] cluster as cofactor.

Its subcellular location is the cytoplasm. Component of the cytosolic iron-sulfur (Fe/S) protein assembly (CIA) machinery. Required for maturation of extramitochondrial Fe-S proteins. The NBP35-CFD1 heterotetramer forms a Fe-S scaffold complex, mediating the de novo assembly of an Fe-S cluster and its transfer to target apoproteins. The chain is Cytosolic Fe-S cluster assembly factor CFD1 from Coccidioides immitis (strain RS) (Valley fever fungus).